The sequence spans 392 residues: Phosphopentomutase (392 aa).

Residues aspartate 14, aspartate 286, histidine 291, aspartate 327, histidine 328, and histidine 339 each contribute to the Mn(2+) site.

It belongs to the phosphopentomutase family. Mn(2+) is required as a cofactor.

It localises to the cytoplasm. The catalysed reaction is 2-deoxy-alpha-D-ribose 1-phosphate = 2-deoxy-D-ribose 5-phosphate. The enzyme catalyses alpha-D-ribose 1-phosphate = D-ribose 5-phosphate. Its pathway is carbohydrate degradation; 2-deoxy-D-ribose 1-phosphate degradation; D-glyceraldehyde 3-phosphate and acetaldehyde from 2-deoxy-alpha-D-ribose 1-phosphate: step 1/2. Isomerase that catalyzes the conversion of deoxy-ribose 1-phosphate (dRib-1-P) and ribose 1-phosphate (Rib-1-P) to deoxy-ribose 5-phosphate (dRib-5-P) and ribose 5-phosphate (Rib-5-P), respectively. The sequence is that of Phosphopentomutase from Staphylococcus aureus (strain Mu3 / ATCC 700698).